Here is a 126-residue protein sequence, read N- to C-terminus: AGGVKKPTTLSMIVAAITAMKNRKGSSVQAIRKYILANNKGINTSHLGSAMKLAFAKGLKSGVLVRLKTSAGASGATGSFRVGKAPASPKKAKKAKSPKKKSSKKSKNKSNNAKAKKSPKKKADSN.

One can recognise an H15 domain in the interval 5–84 (KKPTTLSMIV…GATGSFRVGK (80 aa)). Residues 74–126 (SGATGSFRVGKAPASPKKAKKAKSPKKKSSKKSKNKSNNAKAKKSPKKKADSN) form a disordered region. A compositionally biased stretch (basic residues) spans 90 to 120 (KKAKKAKSPKKKSSKKSKNKSNNAKAKKSPK).

Post-translationally, OE2 and OE3 are produced by post-translational cleavage of a common precursor. Sperm.

It is found in the nucleus. The protein localises to the chromosome. Its function is as follows. Linker histones are implicated in chromatin remodeling and/or transcriptional regulation during spermiogenesis, the process of spermatid maturation into spermatozoa. Protamines substitute for histones in the chromatin of sperm during the haploid phase of spermatogenesis. They compact sperm DNA into a highly condensed, stable and inactive complex. This chain is Sperm-specific H1/protamine-like protein type 2, found in Ostrea edulis (Native oyster).